Consider the following 503-residue polypeptide: Probable cytosol aminopeptidase (503 aa).

K274 and D279 together coordinate Mn(2+). K286 is an active-site residue. Mn(2+) is bound by residues D297, D356, and E358. R360 is a catalytic residue.

It belongs to the peptidase M17 family. Mn(2+) serves as cofactor.

It localises to the cytoplasm. The enzyme catalyses Release of an N-terminal amino acid, Xaa-|-Yaa-, in which Xaa is preferably Leu, but may be other amino acids including Pro although not Arg or Lys, and Yaa may be Pro. Amino acid amides and methyl esters are also readily hydrolyzed, but rates on arylamides are exceedingly low.. It catalyses the reaction Release of an N-terminal amino acid, preferentially leucine, but not glutamic or aspartic acids.. In terms of biological role, presumably involved in the processing and regular turnover of intracellular proteins. Catalyzes the removal of unsubstituted N-terminal amino acids from various peptides. This is Probable cytosol aminopeptidase from Burkholderia lata (strain ATCC 17760 / DSM 23089 / LMG 22485 / NCIMB 9086 / R18194 / 383).